Reading from the N-terminus, the 480-residue chain is ATP synthase subunit beta (480 aa).

152 to 159 is an ATP binding site; sequence GGAGVGKT.

Belongs to the ATPase alpha/beta chains family. In terms of assembly, F-type ATPases have 2 components, CF(1) - the catalytic core - and CF(0) - the membrane proton channel. CF(1) has five subunits: alpha(3), beta(3), gamma(1), delta(1), epsilon(1). CF(0) has three main subunits: a(1), b(2) and c(9-12). The alpha and beta chains form an alternating ring which encloses part of the gamma chain. CF(1) is attached to CF(0) by a central stalk formed by the gamma and epsilon chains, while a peripheral stalk is formed by the delta and b chains.

It is found in the cell membrane. It carries out the reaction ATP + H2O + 4 H(+)(in) = ADP + phosphate + 5 H(+)(out). Functionally, produces ATP from ADP in the presence of a proton gradient across the membrane. The catalytic sites are hosted primarily by the beta subunits. The polypeptide is ATP synthase subunit beta (Wolbachia sp. subsp. Brugia malayi (strain TRS)).